Reading from the N-terminus, the 201-residue chain is Putative lipoprotein Hmuk_2215 (201 aa).

The N-terminal stretch at 1–22 is a signal peptide; that stretch reads MCPRPRRAVLLGLGVAMSAIAG. Residue C23 is modified to N-acetylcysteine. C23 carries the S-archaeol cysteine lipid modification. Disordered regions lie at residues 25–78 and 182–201; these read ETAP…ETSE and ATRA…GDCP. Positions 69–78 are enriched in basic and acidic residues; sequence TRADETETSE.

The protein resides in the cell membrane. In Halomicrobium mukohataei (strain ATCC 700874 / DSM 12286 / JCM 9738 / NCIMB 13541) (Haloarcula mukohataei), this protein is Putative lipoprotein Hmuk_2215.